We begin with the raw amino-acid sequence, 292 residues long: Bifunctional protein FolD (292 aa).

NADP(+)-binding positions include 166 to 168 (GRS), Ser-191, and Ile-232.

This sequence belongs to the tetrahydrofolate dehydrogenase/cyclohydrolase family. In terms of assembly, homodimer.

The enzyme catalyses (6R)-5,10-methylene-5,6,7,8-tetrahydrofolate + NADP(+) = (6R)-5,10-methenyltetrahydrofolate + NADPH. It carries out the reaction (6R)-5,10-methenyltetrahydrofolate + H2O = (6R)-10-formyltetrahydrofolate + H(+). Its pathway is one-carbon metabolism; tetrahydrofolate interconversion. Its function is as follows. Catalyzes the oxidation of 5,10-methylenetetrahydrofolate to 5,10-methenyltetrahydrofolate and then the hydrolysis of 5,10-methenyltetrahydrofolate to 10-formyltetrahydrofolate. The protein is Bifunctional protein FolD of Wolbachia pipientis wMel.